The following is a 296-amino-acid chain: Arginase (296 aa).

Residues His-97, Asp-120, His-122, and Asp-124 each contribute to the Mn(2+) site. Substrate is bound by residues 122–126 (HGDLN), 133–135 (SGN), and Asp-176. Positions 223 and 225 each coordinate Mn(2+). Thr-237 and Glu-268 together coordinate substrate.

Belongs to the arginase family. Requires Mn(2+) as cofactor.

The catalysed reaction is L-arginine + H2O = urea + L-ornithine. Its pathway is nitrogen metabolism; urea cycle; L-ornithine and urea from L-arginine: step 1/1. In terms of biological role, involved in the catabolism of arginine. This chain is Arginase, found in Bacillus subtilis (strain 168).